The sequence spans 484 residues: Glutamate--tRNA ligase (484 aa).

Residues 11–21 (PSPTGYLHIGN) carry the 'HIGH' region motif. The 'KMSKS' region motif lies at 252-256 (KLSKR). Residue K255 coordinates ATP.

It belongs to the class-I aminoacyl-tRNA synthetase family. Glutamate--tRNA ligase type 1 subfamily. As to quaternary structure, monomer.

The protein localises to the cytoplasm. The catalysed reaction is tRNA(Glu) + L-glutamate + ATP = L-glutamyl-tRNA(Glu) + AMP + diphosphate. Functionally, catalyzes the attachment of glutamate to tRNA(Glu) in a two-step reaction: glutamate is first activated by ATP to form Glu-AMP and then transferred to the acceptor end of tRNA(Glu). The sequence is that of Glutamate--tRNA ligase from Staphylococcus aureus (strain Newman).